The chain runs to 498 residues: GTPase Der (498 aa).

EngA-type G domains lie at 3 to 166 (PVVA…FEEL) and 212 to 385 (IKFA…RSAT). GTP is bound by residues 9–16 (GRPNVGKS), 56–60 (DTGGI), 118–121 (NKTD), 218–225 (GRPNVGKS), 265–269 (DTAGV), and 330–333 (NKWD). Positions 386–470 (KRISTSMLTR…PIHIEFQEGD (85 aa)) constitute a KH-like domain.

The protein belongs to the TRAFAC class TrmE-Era-EngA-EngB-Septin-like GTPase superfamily. EngA (Der) GTPase family. In terms of assembly, associates with the 50S ribosomal subunit.

GTPase that plays an essential role in the late steps of ribosome biogenesis. The chain is GTPase Der from Tolumonas auensis (strain DSM 9187 / NBRC 110442 / TA 4).